The chain runs to 268 residues: Tryptophan synthase alpha chain (268 aa).

Residues E49 and D60 each act as proton acceptor in the active site.

The protein belongs to the TrpA family. Tetramer of two alpha and two beta chains.

The enzyme catalyses (1S,2R)-1-C-(indol-3-yl)glycerol 3-phosphate + L-serine = D-glyceraldehyde 3-phosphate + L-tryptophan + H2O. It functions in the pathway amino-acid biosynthesis; L-tryptophan biosynthesis; L-tryptophan from chorismate: step 5/5. Its function is as follows. The alpha subunit is responsible for the aldol cleavage of indoleglycerol phosphate to indole and glyceraldehyde 3-phosphate. This is Tryptophan synthase alpha chain from Yersinia pseudotuberculosis serotype O:3 (strain YPIII).